Here is a 1024-residue protein sequence, read N- to C-terminus: NLR family CARD domain-containing protein 4 (1024 aa).

The CARD domain maps to 1 to 88; it reads MNFIKDNSRA…PLFQDLNGQS (88 aa). Residues 95-298 are nucleotide-binding domain (NBD); it reads EGDLDDLAQD…QFGALTAEVG (204 aa). The region spanning 163–476 is the NACHT domain; sequence SPCIIEGESG…VTKGNGYLQK (314 aa). ATP is bound at residue 169–176; that stretch reads GESGKGKS. A winged-helix domain (WHD) region spans residues 356 to 463; it reads SHTQTTLFHT…RLSSLLTSHE (108 aa). Serine 533 is subject to Phosphoserine. 12 LRR repeats span residues 578–598, 656–679, 735–758, 762–785, 787–812, 824–847, 848–870, 878–902, 911–933, 936–963, 965–985, and 999–1021; these read FFQGKSLYINSGNIPDYLFDF, KQEFRTLEVTLRDFSKLNKQDIRY, VTNLKTLSIHDLQNQRLPGGLTDS, LKNLTKLIMDNIKMNEEDAIKLAE, LKNLKKMCLFHLTHLSDIGEGMDYIV, EIQLVSCCLSANAVKILAQNLHNL, VKLSILDLSENYLEKDGNEALHE, LEQLTALMLPWGCDVQGSLSSLLKH, KLGLKNWRLTDTEIRILGAFFGK, LKNFQQLNLAGNRVSSDGWLAFMGVFEN, KQLVFFDFSTKEFLPDPALVR, and EARLVGWQFDDDDLSVITGAFKL.

In terms of assembly, homooligomer; homooligomerizes to induce formation of the NLRC4 inflammasome. Homooligomerizes following activation by pathogenic proteins. Component of the NLRC4 inflammasome, at least composed of NLRC4 and caspase-1 (CASP1). Some NLRC4 inflammasomes contain PYCARD/ASC, while some others directly contact and activate CASP1. Interacts (via CARD domain) with PYCARD/ASC, pro-caspase-1 (CASP1), NOD2, BCL10 and NALP1 (NAC) by CARD-CARD interaction. Interacts with EIF2AK2/PKR. Phosphorylated at Ser-533 following infection of macrophages with S.typhimurium (Salmonella). Phosphorylation is essential for NLRC4 inflammasome function to promote caspase-1 activation and pyroptosis. PRKCD phosphorylates Ser-533 in vitro. In terms of tissue distribution, isoform 2 is expressed ubiquitously, although highly expressed in lung and spleen. Isoform 1 is highly expressed in lung, followed by leukocytes especially monocytes, lymph node, colon, brain, prostate, placenta, spleen, bone marrow and fetal liver. Isoform 4 is only detected in brain.

Its subcellular location is the cytoplasm. It is found in the cytosol. It localises to the inflammasome. In terms of biological role, key component of inflammasomes that indirectly senses specific proteins from pathogenic bacteria and fungi and responds by assembling an inflammasome complex that promotes caspase-1 activation, cytokine production and macrophage pyroptosis. The NLRC4 inflammasome is activated as part of the innate immune response to a range of intracellular bacteria. The sequence is that of NLR family CARD domain-containing protein 4 (NLRC4) from Homo sapiens (Human).